The following is a 478-amino-acid chain: MNLSIQDELQLFSEELYRHLTPSLLEELAKELGFVKRKRKFSGNELATICIWVSQRTASDSLVRLCSQLHAATGPLMSPEGLNKRFDKKAVEFLKYIFSALWKSKLCKTSAISSAALTYFQRIRILDATIFQVPKHLAHVYPGSGGCAQTAGIKIQLEYDLHSGQFLNFQVGPGKNNDKTFGTDCLDTLRPGDLCIRDLGYFSLEDLDQMDQRGVCYISRLKLNHTVYTKNPFPEYFRNGTIKKQSQYIQVDLENIMHTLKPGQTYEIKESYIGKNQRLFTRVIIYRLTEEQILERRKKQSYTESKKGITFSEKSKRLTGINIYVTNTPWEVVPMEQIHDFYSLRWQIEIIFKTWKSLFQIHHWQTIKQERLECHVYGKLIAIFICSSTMFKMRQLLLQKHKRELSEYKAIGMIQDHLSLLYQAIQRNTRIITKVLIRLFTLLKKNGRKSHRYEKKTIFDIMGVVYEYNGLRKQKKAA.

Belongs to the transposase 11 family.

Functionally, involved in the transposition of the insertion sequence. This Bacillus thuringiensis subsp. berliner protein is Transposase for insertion sequence element IS231C.